We begin with the raw amino-acid sequence, 267 residues long: Hydroxynaphthalene reductase-like protein Arp2 (267 aa).

NADP(+)-binding residues include Ile-25, Asn-45, Asp-71, and Asn-98. Catalysis depends on proton donor residues Ser-147 and Ser-148. Residues Tyr-162, Lys-166, Val-195, and Thr-197 each coordinate NADP(+). The Proton acceptor role is filled by Tyr-162. Lys-166 serves as the catalytic Lowers pKa of active site Tyr.

Belongs to the short-chain dehydrogenases/reductases (SDR) family.

In terms of biological role, hydroxynaphthalene reductase-like protein; part of the Pks2 gene cluster that mediates the formation of infectious structures (appressoria), enabling these fungi to kill insects faster. The product of the Pks2 gene cluster is different from the one of Pks1 and has still not been identified. In Metarhizium robertsii (strain ARSEF 23 / ATCC MYA-3075) (Metarhizium anisopliae (strain ARSEF 23)), this protein is Hydroxynaphthalene reductase-like protein Arp2.